Here is a 322-residue protein sequence, read N- to C-terminus: MSVARIAYLGPEGTFTEAALLRMTAAGLVPDTGPDGLRRWPTESTPAALDAVRGGAADYACVPIENSIDGSVAPTLDNLAIGSPLQVFAETTLDVEFNIVVKPGITAADIRTLAAFPVAAAQVRQWLAAHLAGAELRPAYSNADAARQVAYGQVDAAVTSPLAATRWGLIALAAGIVDEPNARTRFVLVGMPGPPPARTGTDRTSAVLRIDNAPGMLVAALAEFGIRGIDLTRIESRPTRTELGTYLFFVDCVGHIDDGVVAEALKALHRRCADVCYLGSWPAGLATGPTVSPPPPDEASRWLARLRAGKPDQASEPGGGKL.

In terms of domain architecture, Prephenate dehydratase spans 5 to 191 (RIAYLGPEGT…ARTRFVLVGM (187 aa)). The ACT domain occupies 205 to 282 (SAVLRIDNAP…ADVCYLGSWP (78 aa)). Residues 286 to 322 (ATGPTVSPPPPDEASRWLARLRAGKPDQASEPGGGKL) form a disordered region.

Homodimer.

The catalysed reaction is prephenate + H(+) = 3-phenylpyruvate + CO2 + H2O. It functions in the pathway amino-acid biosynthesis; L-phenylalanine biosynthesis; phenylpyruvate from prephenate: step 1/1. The chain is Prephenate dehydratase (pheA) from Mycobacterium leprae (strain Br4923).